We begin with the raw amino-acid sequence, 944 residues long: Protein phosphatase 1 regulatory subunit 37 homolog (944 aa).

Residues 42–71 (QQQSHSAATSVRKKTCQDANSSGEDPNGRI) are disordered. 5 LRR repeats span residues 203–224 (SCVRLNLSFNKQIDMRGWTTIF), 232–255 (SLQMLNLRYTNLNDRSIPALCKMA), 262–282 (SLTCLHLENTQMSGKNLLVLI), 290–311 (GLRELYLGDNGLQPTDGSHIYQ), and 318–338 (SLQLLDLRNNSIGDSGVRHIC). Positions 517-598 (EEGDSGVEKK…KERHQRFVRS (82 aa)) are disordered. Over residues 522–542 (GVEKKDGNECEGEDNKDRQDT) the composition is skewed to basic and acidic residues. 2 stretches are compositionally biased toward polar residues: residues 543–554 (PAETENGVSSNE) and 567–585 (PESNNNEKSPLMASSSTSK). Residues 586–595 (LSRKERHQRF) show a composition bias toward basic residues.

The protein belongs to the PPP1R37 family.

In Caenorhabditis elegans, this protein is Protein phosphatase 1 regulatory subunit 37 homolog.